A 419-amino-acid chain; its full sequence is G protein-activated inward rectifier potassium channel 4 (419 aa).

Residues 1-86 (MAGDSRNAMN…LFTTLVDLKW (86 aa)) are Cytoplasmic-facing. Position 5 is a phosphoserine (Ser-5). The chain crosses the membrane as a helical span at residues 87–111 (RFNLLVFTMVYTITWLFFGFIWWLI). The Extracellular segment spans residues 112 to 135 (AYVRGDLDHVGDQEWIPCVENLSG). Residues 136–147 (FVSAFLFSIETE) constitute an intramembrane region (helical; Pore-forming). The segment at residues 148–154 (TTIGYGF) is an intramembrane region (pore-forming). A Selectivity filter motif is present at residues 149 to 154 (TIGYGF). Topologically, residues 155 to 163 (RVITEKCPE) are extracellular. Residues 164–185 (GIILLLVQAILGSIVNAFMVGC) traverse the membrane as a helical segment. Topologically, residues 186–419 (MFVKISQPKK…SVSQATRGSM (234 aa)) are cytoplasmic. The tract at residues 388-419 (GCAEAGNEAEAEKDEEGEPNGLSVSQATRGSM) is disordered. Residues 394–405 (NEAEAEKDEEGE) are compositionally biased toward acidic residues. Residues 409–419 (LSVSQATRGSM) show a composition bias toward polar residues.

The protein belongs to the inward rectifier-type potassium channel (TC 1.A.2.1) family. KCNJ5 subfamily. Associates with KCNJ3/GIRK1 to form a G-protein-activated heteromultimer pore-forming unit. Associates with KCNJ6/GRIK2 to form a G-protein-activated heteromultimer pore-forming unit. As to expression, expressed in the heart.

The protein localises to the membrane. It carries out the reaction K(+)(in) = K(+)(out). With respect to regulation, heteromultimer composed of KCNJ3/GIRK1 and KCNJ5/GIRK4 is activated by phosphatidylinositol 4,5 biphosphate (PtdIns(4,5)P2). Inward rectifier potassium channels are characterized by a greater tendency to allow potassium to flow into the cell rather than out of it. Their voltage dependence is regulated by the concentration of extracellular potassium; as external potassium is raised, the voltage range of the channel opening shifts to more positive voltages. The inward rectification is mainly due to the blockage of outward current by internal magnesium. Can be blocked by external barium. This potassium channel is controlled by G proteins. Forms a functional channel in association with KCNJ3/GIRK1. The sequence is that of G protein-activated inward rectifier potassium channel 4 (Kcnj5) from Mus musculus (Mouse).